Here is a 629-residue protein sequence, read N- to C-terminus: ATP-dependent DNA helicase II subunit 2 (629 aa).

The Ku domain maps to 254–476 (SGLNRKTAVE…GHQIDELMEQ (223 aa)). Over residues 608-620 (DLETLLKRGEQHS) the composition is skewed to basic and acidic residues. The tract at residues 608 to 629 (DLETLLKRGEQHSRGSPNNSNN) is disordered.

The protein belongs to the ku80 family. As to quaternary structure, heterodimer of YKU70/HDF1 and YKU80/HDF2. Interacts with SIR4.

It is found in the nucleus. The protein resides in the chromosome. The protein localises to the telomere. The enzyme catalyses ATP + H2O = ADP + phosphate + H(+). Its function is as follows. Single-stranded DNA-dependent ATP-dependent helicase. Involved in non-homologous end joining (NHEJ) DNA double strand break repair. DNA-binding is sequence-independent but has a high affinity to nicks in double-stranded DNA and to the ends of duplex DNA. Binds to naturally occurring chromosomal ends, and therefore provides chromosomal end protection. Appears to have a role in recruitment of telomerase and CDC13 to the telomere and the subsequent telomere elongation. Required also for telomere recombination to repair telomeric ends in the absence of telomerase. KU70, of the KU70/KU80 heterodimer, binds to the stem loop of TLC1, the RNA component of telomerase. Involved in telomere maintenance. Interacts with telomeric repeats and subtelomeric sequences thereby controlling telomere length and protecting against subtelomeric rearrangement. Maintains telomeric chromatin, which is involved in silencing the expression of genes located at the telomere. Required for mating-type switching. The protein is ATP-dependent DNA helicase II subunit 2 (YKU80) of Saccharomyces cerevisiae (strain ATCC 204508 / S288c) (Baker's yeast).